The chain runs to 167 residues: Phosphopantetheine adenylyltransferase (167 aa).

S9 provides a ligand contact to substrate. ATP is bound by residues 9–10 (SF) and H17. Substrate contacts are provided by K41, L73, and K87. ATP contacts are provided by residues 88 to 90 (GLR), E98, and 123 to 129 (YSYLSSS).

Belongs to the bacterial CoaD family. As to quaternary structure, homohexamer. The cofactor is Mg(2+).

Its subcellular location is the cytoplasm. The catalysed reaction is (R)-4'-phosphopantetheine + ATP + H(+) = 3'-dephospho-CoA + diphosphate. The protein operates within cofactor biosynthesis; coenzyme A biosynthesis; CoA from (R)-pantothenate: step 4/5. Reversibly transfers an adenylyl group from ATP to 4'-phosphopantetheine, yielding dephospho-CoA (dPCoA) and pyrophosphate. The protein is Phosphopantetheine adenylyltransferase of Caldicellulosiruptor bescii (strain ATCC BAA-1888 / DSM 6725 / KCTC 15123 / Z-1320) (Anaerocellum thermophilum).